The following is a 29-amino-acid chain: HSQGTFTSDYSKYLDTRRAQDFVQWLMST.

It belongs to the glucagon family.

It localises to the secreted. Functionally, glucagon plays a key role in glucose metabolism and homeostasis. Regulates blood glucose by increasing gluconeogenesis and decreasing glycolysis. This Struthio camelus (Common ostrich) protein is Glucagon (GCG).